A 404-amino-acid polypeptide reads, in one-letter code: MKLPIYLDYSATTPVDPRVAQKMIDCLTVEGNFGNPASRSHVFGWKAEEAVENARRQVADLVNADPREIVWTSGATESNNLAIKGVAHFYASKGKHLITSKVEHKAVLDTTRQLEREGFEVTYIEPGEDGLITPAMIEAALRDDTILVSIMHVNNEIGTINDIAAIGELTRSRGVLFHVDGAQSTGKVEIDLASLKVDLMSFSAHKTYGPKGIGALYVSRKPRVRLEATMHGGGHERGMRSGTLATHQIVGMGEAFRIAKEEMAAENVRIKALSDRFFKQVENLEELYVNGSLTARVPHNLNLSFNYVEGESLIMALKDLAVSSGSACTSASLEPSYVLRALGRNDELAHSSIRFTFGRFSTEEEIDYAAQKVCEAVTRLRTLSPLWDMFKDGVDISKIEWAAH.

Pyridoxal 5'-phosphate-binding positions include 75–76 (AT), N155, Q183, and 203–205 (SAH). K206 is subject to N6-(pyridoxal phosphate)lysine. T243 contacts pyridoxal 5'-phosphate. C328 acts as the Cysteine persulfide intermediate in catalysis. Position 328 (C328) interacts with [2Fe-2S] cluster.

Belongs to the class-V pyridoxal-phosphate-dependent aminotransferase family. NifS/IscS subfamily. As to quaternary structure, homodimer. Forms a heterotetramer with IscU, interacts with other sulfur acceptors. The cofactor is pyridoxal 5'-phosphate.

The protein resides in the cytoplasm. The enzyme catalyses (sulfur carrier)-H + L-cysteine = (sulfur carrier)-SH + L-alanine. The protein operates within cofactor biosynthesis; iron-sulfur cluster biosynthesis. In terms of biological role, master enzyme that delivers sulfur to a number of partners involved in Fe-S cluster assembly, tRNA modification or cofactor biosynthesis. Catalyzes the removal of elemental sulfur atoms from cysteine to produce alanine. Functions as a sulfur delivery protein for Fe-S cluster synthesis onto IscU, an Fe-S scaffold assembly protein, as well as other S acceptor proteins. The polypeptide is Cysteine desulfurase IscS (Pseudomonas syringae pv. syringae (strain B728a)).